We begin with the raw amino-acid sequence, 957 residues long: Translation initiation factor IF-2 (957 aa).

2 disordered regions span residues 34 to 282 and 311 to 367; these read KSHS…RVVK and SQSL…TIAG. A compositionally biased stretch (pro residues) spans 107 to 161; sequence PARPQPPQAPTRPTPPAPVAPKPVEPVAAKPPAPPAKPEPTPPRPVPTLVPPPTR. Over residues 163-188 the composition is skewed to basic and acidic residues; it reads TKKEEKVAATPPPRKELKEPPKKEKG. The span at 209 to 242 shows a compositional bias: pro residues; it reads PPAPAKPPEMAPKPALPELQPPPKPVRAPNPPKP. Basic and acidic residues-rich tracts occupy residues 250–259 and 266–275; these read LDDKSVSKVI and KDFDEEESKR. One can recognise a tr-type G domain in the interval 444-617; sequence RRPPVVTIMG…LLVAEVEDLY (174 aa). Residues 453–460 are G1; that stretch reads GHVDHGKT. A GTP-binding site is contributed by 453 to 460; the sequence is GHVDHGKT. Residues 478 to 482 are G2; it reads GITQH. Positions 503–506 are G3; the sequence is DTPG. Residues 503 to 507 and 557 to 560 each bind GTP; these read DTPGH and NKID. The tract at residues 557 to 560 is G4; that stretch reads NKID. A G5 region spans residues 593–595; it reads SAL.

It belongs to the TRAFAC class translation factor GTPase superfamily. Classic translation factor GTPase family. IF-2 subfamily.

Its subcellular location is the cytoplasm. In terms of biological role, one of the essential components for the initiation of protein synthesis. Protects formylmethionyl-tRNA from spontaneous hydrolysis and promotes its binding to the 30S ribosomal subunits. Also involved in the hydrolysis of GTP during the formation of the 70S ribosomal complex. The polypeptide is Translation initiation factor IF-2 (Thermosynechococcus vestitus (strain NIES-2133 / IAM M-273 / BP-1)).